Consider the following 341-residue polypeptide: Phenylalanine--tRNA ligase alpha subunit (341 aa).

Glutamate 254 is a Mg(2+) binding site.

It belongs to the class-II aminoacyl-tRNA synthetase family. Phe-tRNA synthetase alpha subunit type 1 subfamily. In terms of assembly, tetramer of two alpha and two beta subunits. The cofactor is Mg(2+).

The protein resides in the cytoplasm. It carries out the reaction tRNA(Phe) + L-phenylalanine + ATP = L-phenylalanyl-tRNA(Phe) + AMP + diphosphate + H(+). In Chlorobium phaeobacteroides (strain DSM 266 / SMG 266 / 2430), this protein is Phenylalanine--tRNA ligase alpha subunit.